Here is a 658-residue protein sequence, read N- to C-terminus: Threonine--tRNA ligase (658 aa).

Residues 1–64 (MSNTVSLQFP…GASGKVEIIT (64 aa)) form the TGS domain. Residues 246-548 (DHRRLGREMD…LIENFAGHMP (303 aa)) form a catalytic region. Residues Cys343, His394, and His525 each coordinate Zn(2+).

This sequence belongs to the class-II aminoacyl-tRNA synthetase family. Homodimer. Zn(2+) serves as cofactor.

Its subcellular location is the cytoplasm. It catalyses the reaction tRNA(Thr) + L-threonine + ATP = L-threonyl-tRNA(Thr) + AMP + diphosphate + H(+). Its function is as follows. Catalyzes the attachment of threonine to tRNA(Thr) in a two-step reaction: L-threonine is first activated by ATP to form Thr-AMP and then transferred to the acceptor end of tRNA(Thr). Also edits incorrectly charged L-seryl-tRNA(Thr). The sequence is that of Threonine--tRNA ligase from Brucella canis (strain ATCC 23365 / NCTC 10854 / RM-666).